Consider the following 337-residue polypeptide: MPSAPQKTKSFRLQTKYVFLTYPRCSSSAENLRDFLWDKLSRFAIFFIAIATELHQDGTPHLHCLIQLDKRSNIRDPSFFDLEGNHPNIQPAKNSEQVLEYISKDGNVITKGEFKKHRVSPSKSDERWRTIIQTATSKEEYLDMIKDEFPHEWATKLQWLEYSANKLFPPQPEIYQATFTEEDLQCHEDLQLWRDQHLYHEPRRAGTRIPSLYICGPSRTGKTTWARSLGRHNYWNGTIDFTVYDDHATYNVIDDIPFKFVPLWKQLIGCQSDFTVNPKYGKKKKIKGGVPCIILCNDDEDWLKNMSPAQIEYFEANCITHFMYAAETFFAPESSSH.

The 103-residue stretch at 12–114 (RLQTKYVFLT…DGNVITKGEF (103 aa)) folds into the CRESS-DNA virus Rep endonuclease domain. Positions 19-22 (FLTY) match the RCR-1 motif. The a divalent metal cation site is built by E53, H61, and H63. The short motif at 61–63 (HLH) is the RCR-2 element. Y101 acts as the For DNA cleavage activity in catalysis. The RCR-3 signature appears at 101 to 104 (YISK). Position 105 (D105) interacts with a divalent metal cation. An oligomerization region spans residues 163–175 (SANKLFPPQPEIY). ATP is bound at residue 216–223 (GPSRTGKT). The interval 239-257 (IDFTVYDDHATYNVIDDIP) is transactivation. The Nuclear localization signal motif lies at 279–289 (KYGKKKKIKGG).

It belongs to the geminiviridae Rep protein family. Homooligomer. Rep binds to repeated DNA motifs (iterons). Forms the O-complex, which is a Rep-DNA complex involved in the initiation of RCR. Part of the C- and V-complexes which are RepA-Rep-DNA complexes involved in the c-sense and v-sense transcription. It depends on Mg(2+) as a cofactor. Mn(2+) is required as a cofactor.

It localises to the host nucleus. In terms of biological role, essential for the replication of viral ssDNA. The closed circular ssDNA genome is first converted to a superhelical dsDNA. Rep binds a specific region at the genome origin of replication. It introduces an endonucleolytic nick within the conserved sequence 5'-TAATATTAC-3' in the intergenic region of the genome present in all geminiviruses, thereby initiating the rolling circle replication (RCR). Following cleavage, binds covalently to the 5'-phosphate of DNA as a tyrosyl ester. The cleavage gives rise to a free 3'-OH that serves as a primer for the cellular DNA polymerase. The polymerase synthesizes the (+) strand DNA by rolling circle mechanism. After one round of replication, a Rep-catalyzed nucleotidyl transfer reaction releases a circular single-stranded virus genome, thereby terminating the replication. Displays origin-specific DNA cleavage, nucleotidyl transferase, ATPase and helicase activities. Acts as an inhibitor of C-sense gene transcription. The chain is Replication-associated protein from Tobacco yellow dwarf virus (strain Australia) (TYDV).